A 571-amino-acid chain; its full sequence is Potassium-transporting ATPase potassium-binding subunit (571 aa).

A run of 10 helical transmembrane segments spans residues 7 to 27 (LQFA…GGYL), 66 to 86 (TYAL…YGIA), 137 to 157 (GLAV…AALI), 188 to 208 (FVVA…GFIV), 255 to 275 (IGNF…CFAF), 286 to 306 (WAVL…AMSF), 390 to 410 (VGLN…GLMV), 430 to 450 (TLYI…SVLI), 497 to 517 (IGVA…AIAG), and 538 to 558 (LFVG…FFPA).

This sequence belongs to the KdpA family. In terms of assembly, the system is composed of three essential subunits: KdpA, KdpB and KdpC.

The protein localises to the cell membrane. Part of the high-affinity ATP-driven potassium transport (or Kdp) system, which catalyzes the hydrolysis of ATP coupled with the electrogenic transport of potassium into the cytoplasm. This subunit binds the extracellular potassium ions and delivers the ions to the membrane domain of KdpB through an intramembrane tunnel. This is Potassium-transporting ATPase potassium-binding subunit from Mycobacterium bovis (strain ATCC BAA-935 / AF2122/97).